Consider the following 648-residue polypeptide: 1-deoxy-D-xylulose-5-phosphate synthase 1 (648 aa).

Residues His82 and 123–125 (AHS) contribute to the thiamine diphosphate site. A Mg(2+)-binding site is contributed by Asp154. Residues 155 to 156 (GS), Asn183, Tyr292, and Glu374 contribute to the thiamine diphosphate site. Asn183 is a binding site for Mg(2+).

It belongs to the transketolase family. DXPS subfamily. In terms of assembly, homodimer. The cofactor is Mg(2+). Thiamine diphosphate serves as cofactor.

It catalyses the reaction D-glyceraldehyde 3-phosphate + pyruvate + H(+) = 1-deoxy-D-xylulose 5-phosphate + CO2. It functions in the pathway metabolic intermediate biosynthesis; 1-deoxy-D-xylulose 5-phosphate biosynthesis; 1-deoxy-D-xylulose 5-phosphate from D-glyceraldehyde 3-phosphate and pyruvate: step 1/1. In terms of biological role, catalyzes the acyloin condensation reaction between C atoms 2 and 3 of pyruvate and glyceraldehyde 3-phosphate to yield 1-deoxy-D-xylulose-5-phosphate (DXP). This Cereibacter sphaeroides (strain ATCC 17023 / DSM 158 / JCM 6121 / CCUG 31486 / LMG 2827 / NBRC 12203 / NCIMB 8253 / ATH 2.4.1.) (Rhodobacter sphaeroides) protein is 1-deoxy-D-xylulose-5-phosphate synthase 1.